We begin with the raw amino-acid sequence, 421 residues long: D-amino acid dehydrogenase (421 aa).

Residue 3–17 coordinates FAD; that stretch reads ILILGSGVVGTASAY.

The protein belongs to the DadA oxidoreductase family. It depends on FAD as a cofactor.

The enzyme catalyses a D-alpha-amino acid + A + H2O = a 2-oxocarboxylate + AH2 + NH4(+). It functions in the pathway amino-acid degradation; D-alanine degradation; NH(3) and pyruvate from D-alanine: step 1/1. Oxidative deamination of D-amino acids. The polypeptide is D-amino acid dehydrogenase (Xanthobacter autotrophicus (strain ATCC BAA-1158 / Py2)).